The sequence spans 267 residues: MVKIAVCGAAGRMGGRIIAAVKEAEGVEICGALERPGHPMVGQDAGYNAGLGAIGVAISDDLNAVVQACDVLIDFTAPKVSLKNLEVCALYGKSIVIGSTGFTPEERALAAELAREIPVIIAPNMSVGVNVCFKVLADVAKILGEDFDVEIVESHHRLKKDSPSGTAVRMGEVVASALGRDYNKVANYHREGICGERTHDEIGMQTVRGGDIVGEHTVYFIGMGERIEITHRAHTRDMFSRGSVRAAKWVVTAKPGVYDMQDVLGLR.

Residues 8–13 (GAAGRM) and glutamate 34 contribute to the NAD(+) site. An NADP(+)-binding site is contributed by arginine 35. NAD(+)-binding positions include 98–100 (GST) and 122–125 (APNM). Histidine 155 serves as the catalytic Proton donor/acceptor. A (S)-2,3,4,5-tetrahydrodipicolinate-binding site is contributed by histidine 156. Catalysis depends on lysine 159, which acts as the Proton donor. 165–166 (GT) is a binding site for (S)-2,3,4,5-tetrahydrodipicolinate.

The protein belongs to the DapB family.

It is found in the cytoplasm. It carries out the reaction (S)-2,3,4,5-tetrahydrodipicolinate + NAD(+) + H2O = (2S,4S)-4-hydroxy-2,3,4,5-tetrahydrodipicolinate + NADH + H(+). The enzyme catalyses (S)-2,3,4,5-tetrahydrodipicolinate + NADP(+) + H2O = (2S,4S)-4-hydroxy-2,3,4,5-tetrahydrodipicolinate + NADPH + H(+). Its pathway is amino-acid biosynthesis; L-lysine biosynthesis via DAP pathway; (S)-tetrahydrodipicolinate from L-aspartate: step 4/4. In terms of biological role, catalyzes the conversion of 4-hydroxy-tetrahydrodipicolinate (HTPA) to tetrahydrodipicolinate. In Citrifermentans bemidjiense (strain ATCC BAA-1014 / DSM 16622 / JCM 12645 / Bem) (Geobacter bemidjiensis), this protein is 4-hydroxy-tetrahydrodipicolinate reductase.